We begin with the raw amino-acid sequence, 450 residues long: Acyltransferase GLAUCE (450 aa).

Residues histidine 171 and glutamate 394 each act as proton acceptor in the active site.

This sequence belongs to the plant acyltransferase family. Restricted to the central cells of embryo sacs.

The protein resides in the cytoplasm. It is found in the nucleus. Required for double fertilization of the egg cell and the central cell by two sperm cells, resulting in the formation of the embryo and the endosperm. Involved in the regulation of embryonic expression of PHE1. Essential in maternal tissues to ensure the paternal embryonic expression of several genes, including RPS5a and FAC1, both of which being essential for early embryo and endosperm development in fertilized seeds. This is Acyltransferase GLAUCE from Arabidopsis thaliana (Mouse-ear cress).